A 360-amino-acid polypeptide reads, in one-letter code: Peptide chain release factor 1 (360 aa).

Q237 bears the N5-methylglutamine mark.

Belongs to the prokaryotic/mitochondrial release factor family. Methylated by PrmC. Methylation increases the termination efficiency of RF1.

The protein localises to the cytoplasm. Peptide chain release factor 1 directs the termination of translation in response to the peptide chain termination codons UAG and UAA. This Pseudomonas syringae pv. tomato (strain ATCC BAA-871 / DC3000) protein is Peptide chain release factor 1.